The following is a 351-amino-acid chain: Glycerol-3-phosphate dehydrogenase [NAD(P)+] (351 aa).

NADPH contacts are provided by serine 12, tryptophan 13, histidine 33, and lysine 114. Sn-glycerol 3-phosphate-binding residues include lysine 114, glycine 145, and serine 147. Residue alanine 149 participates in NADPH binding. Residues lysine 200, aspartate 253, serine 263, arginine 264, and asparagine 265 each contribute to the sn-glycerol 3-phosphate site. Lysine 200 functions as the Proton acceptor in the catalytic mechanism. Arginine 264 serves as a coordination point for NADPH. NADPH-binding residues include valine 288 and glutamate 290.

It belongs to the NAD-dependent glycerol-3-phosphate dehydrogenase family.

Its subcellular location is the cytoplasm. It carries out the reaction sn-glycerol 3-phosphate + NAD(+) = dihydroxyacetone phosphate + NADH + H(+). The catalysed reaction is sn-glycerol 3-phosphate + NADP(+) = dihydroxyacetone phosphate + NADPH + H(+). It participates in membrane lipid metabolism; glycerophospholipid metabolism. Its function is as follows. Catalyzes the reduction of the glycolytic intermediate dihydroxyacetone phosphate (DHAP) to sn-glycerol 3-phosphate (G3P), the key precursor for phospholipid synthesis. This Lacticaseibacillus casei (strain BL23) (Lactobacillus casei) protein is Glycerol-3-phosphate dehydrogenase [NAD(P)+].